We begin with the raw amino-acid sequence, 208 residues long: Ras-related protein Rab-6A (208 aa).

S2 is subject to N-acetylserine. GTP contacts are provided by S23, V24, G25, K26, T27, S28, D39, N40, Y42, and T45. Residue T27 participates in Mg(2+) binding. Positions 32–50 (RFMYDSFDNTYQATIGIDF) match the Switch 1 motif. Mg(2+) contacts are provided by T45 and D68. A Switch 2 motif is present at residues 69–88 (TAGQERFRSLIPSYIRDSAA). GTP-binding residues include G71, N126, K127, D129, S156, A157, and K158. Residues C206 and C208 are each lipidated (S-geranylgeranyl cysteine). Cysteine methyl ester is present on C208.

This sequence belongs to the small GTPase superfamily. Rab family. The cofactor is Mg(2+).

It is found in the golgi apparatus membrane. The catalysed reaction is GTP + H2O = GDP + phosphate + H(+). Its activity is regulated as follows. Regulated by guanine nucleotide exchange factors (GEFs) which promote the exchange of bound GDP for free GTP. Regulated by GTPase activating proteins (GAPs) which increase the GTP hydrolysis activity. Inhibited by GDP dissociation inhibitors (GDIs). The small GTPases Rab are key regulators of intracellular membrane trafficking, from the formation of transport vesicles to their fusion with membranes. Rabs cycle between an inactive GDP-bound form and an active GTP-bound form that is able to recruit to membranes different sets of downstream effectors directly responsible for vesicle formation, movement, tethering and fusion. RAB6A acts as a regulator of COPI-independent retrograde transport from the Golgi apparatus towards the endoplasmic reticulum (ER). The sequence is that of Ras-related protein Rab-6A (RAB6A) from Gallus gallus (Chicken).